The sequence spans 388 residues: LL-diaminopimelate aminotransferase (388 aa).

Substrate-binding residues include Y16 and G41. Pyridoxal 5'-phosphate contacts are provided by residues Y70, S104–K105, Y129, N179, Y210, and S239–S241. Residues K105, Y129, and N179 each coordinate substrate. Residue K242 is modified to N6-(pyridoxal phosphate)lysine. R250 serves as a coordination point for pyridoxal 5'-phosphate. Substrate is bound at residue R368.

Belongs to the class-I pyridoxal-phosphate-dependent aminotransferase family. LL-diaminopimelate aminotransferase subfamily. As to quaternary structure, homodimer. Pyridoxal 5'-phosphate is required as a cofactor.

It carries out the reaction (2S,6S)-2,6-diaminopimelate + 2-oxoglutarate = (S)-2,3,4,5-tetrahydrodipicolinate + L-glutamate + H2O + H(+). It functions in the pathway amino-acid biosynthesis; L-lysine biosynthesis via DAP pathway; LL-2,6-diaminopimelate from (S)-tetrahydrodipicolinate (aminotransferase route): step 1/1. Functionally, involved in the synthesis of meso-diaminopimelate (m-DAP or DL-DAP), required for both lysine and peptidoglycan biosynthesis. Catalyzes the direct conversion of tetrahydrodipicolinate to LL-diaminopimelate. In Oleidesulfovibrio alaskensis (strain ATCC BAA-1058 / DSM 17464 / G20) (Desulfovibrio alaskensis), this protein is LL-diaminopimelate aminotransferase.